Reading from the N-terminus, the 516-residue chain is ADP-ribosylation factor GTPase-activating protein 3 (516 aa).

In terms of domain architecture, Arf-GAP spans 10-126; the sequence is LTIFKRLRSV…IKSLASQATR (117 aa). A C4-type zinc finger spans residues 25-48; the sequence is CFDCGAKNPSWASITYGVFLCIDC. The disordered stretch occupies residues 170–199; it reads AEPSSLTSRPVETTLENNEGGQEQGPSVEG. The segment covering 173–194 has biased composition (polar residues); sequence SSLTSRPVETTLENNEGGQEQG. Serine 231 bears the Phosphoserine mark. Positions 243 to 264 form a coiled coil; that stretch reads NEIEKQAQAADKMKEQEDLAKA. Residues serine 270, serine 274, serine 331, and serine 370 each carry the phosphoserine modification. The tract at residues 392-414 is disordered; it reads KTTGYSDRPTARRKPDYEPVENT. Serine 428, serine 451, serine 453, serine 455, serine 457, and serine 458 each carry phosphoserine.

It localises to the cytoplasm. The protein resides in the golgi apparatus membrane. GAP activity stimulated by phosphatidylinositol 4,5-bisphosphate (PIP2). In terms of biological role, GTPase-activating protein (GAP) for ADP ribosylation factor 1 (ARF1). Hydrolysis of ARF1-bound GTP may lead to dissociation of coatomer from Golgi-derived membranes to allow fusion with target membranes. This chain is ADP-ribosylation factor GTPase-activating protein 3, found in Macaca fascicularis (Crab-eating macaque).